Consider the following 307-residue polypeptide: Ornithine carbamoyltransferase (307 aa).

Residues 55 to 58, Gln-82, Arg-106, and 133 to 136 each bind carbamoyl phosphate; these read STRT and HPCQ. L-ornithine is bound by residues Asn-164, Asp-224, and 228–229; that span reads SM. Residues 263–264 and Arg-291 each bind carbamoyl phosphate; that span reads CL.

It belongs to the aspartate/ornithine carbamoyltransferase superfamily. OTCase family.

It localises to the cytoplasm. The enzyme catalyses carbamoyl phosphate + L-ornithine = L-citrulline + phosphate + H(+). It functions in the pathway amino-acid biosynthesis; L-arginine biosynthesis; L-arginine from L-ornithine and carbamoyl phosphate: step 1/3. In terms of biological role, reversibly catalyzes the transfer of the carbamoyl group from carbamoyl phosphate (CP) to the N(epsilon) atom of ornithine (ORN) to produce L-citrulline. This Bradyrhizobium diazoefficiens (strain JCM 10833 / BCRC 13528 / IAM 13628 / NBRC 14792 / USDA 110) protein is Ornithine carbamoyltransferase.